A 292-amino-acid polypeptide reads, in one-letter code: GTP cyclohydrolase FolE2 (292 aa).

Belongs to the GTP cyclohydrolase IV family.

The enzyme catalyses GTP + H2O = 7,8-dihydroneopterin 3'-triphosphate + formate + H(+). Its pathway is cofactor biosynthesis; 7,8-dihydroneopterin triphosphate biosynthesis; 7,8-dihydroneopterin triphosphate from GTP: step 1/1. In terms of biological role, converts GTP to 7,8-dihydroneopterin triphosphate. This chain is GTP cyclohydrolase FolE2, found in Macrococcus caseolyticus (strain JCSC5402) (Macrococcoides caseolyticum).